A 548-amino-acid polypeptide reads, in one-letter code: Lysine--tRNA ligase (548 aa).

The 'HIGH' region signature appears at 43–51 (PSGVPHLGN). The 'KMSKS' region motif lies at 308 to 312 (PFSSS).

Belongs to the class-I aminoacyl-tRNA synthetase family.

Its subcellular location is the cytoplasm. The enzyme catalyses tRNA(Lys) + L-lysine + ATP = L-lysyl-tRNA(Lys) + AMP + diphosphate. This Halobacterium salinarum (strain ATCC 700922 / JCM 11081 / NRC-1) (Halobacterium halobium) protein is Lysine--tRNA ligase.